A 79-amino-acid chain; its full sequence is Cell division protein ZapB (79 aa).

A coiled-coil region spans residues 3 to 79 (LEVFEKLEAK…QALLGRMEEV (77 aa)).

Belongs to the ZapB family. In terms of assembly, homodimer. The ends of the coiled-coil dimer bind to each other, forming polymers. Interacts with FtsZ.

It localises to the cytoplasm. Functionally, non-essential, abundant cell division factor that is required for proper Z-ring formation. It is recruited early to the divisome by direct interaction with FtsZ, stimulating Z-ring assembly and thereby promoting cell division earlier in the cell cycle. Its recruitment to the Z-ring requires functional FtsA or ZipA. This is Cell division protein ZapB from Salmonella typhi.